The primary structure comprises 104 residues: uncharacterized protein (104 aa).

This is an uncharacterized protein from Escherichia coli (strain K12).